The following is a 22-amino-acid chain: Brevinin-1OKc (22 aa).

Lysine 22 bears the Lysine amide mark.

Expressed by the skin glands.

The protein resides in the secreted. Antimicrobial peptide. Active against Gram-negative bacterium E.coli (MIC=6 uM) and against Gram-positive bacterium S.aureus (MIC=12.5 uM). This is Brevinin-1OKc from Nidirana okinavana (Kampira Falls frog).